A 177-amino-acid chain; its full sequence is Large ribosomal subunit protein uL6 (177 aa).

The protein belongs to the universal ribosomal protein uL6 family. As to quaternary structure, part of the 50S ribosomal subunit.

Functionally, this protein binds to the 23S rRNA, and is important in its secondary structure. It is located near the subunit interface in the base of the L7/L12 stalk, and near the tRNA binding site of the peptidyltransferase center. The polypeptide is Large ribosomal subunit protein uL6 (Leptothrix cholodnii (strain ATCC 51168 / LMG 8142 / SP-6) (Leptothrix discophora (strain SP-6))).